The chain runs to 160 residues: Cytochrome b6-f complex subunit 4 (160 aa).

The next 3 membrane-spanning stretches (helical) occupy residues 36–56 (LLYIFPVVILGTIACVVGLAV), 95–115 (LLGIALQTLIPLGLMILPFIE), and 128–148 (IAMSLFLFGTFLTIYLGIGAC).

This sequence belongs to the cytochrome b family. PetD subfamily. In terms of assembly, the 4 large subunits of the cytochrome b6-f complex are cytochrome b6, subunit IV (17 kDa polypeptide, PetD), cytochrome f and the Rieske protein, while the 4 small subunits are PetG, PetL, PetM and PetN. The complex functions as a dimer.

It localises to the cellular thylakoid membrane. Component of the cytochrome b6-f complex, which mediates electron transfer between photosystem II (PSII) and photosystem I (PSI), cyclic electron flow around PSI, and state transitions. The sequence is that of Cytochrome b6-f complex subunit 4 from Prochlorococcus marinus (strain MIT 9312).